A 425-amino-acid chain; its full sequence is Argininosuccinate synthase (425 aa).

ATP contacts are provided by residues 7-15 (AYSGGLDTS) and Ala-33. Tyr-84 contacts L-citrulline. Residue Gly-114 coordinates ATP. L-aspartate-binding residues include Thr-116, Asn-120, and Asp-121. Asn-120 is a binding site for L-citrulline. Positions 124, 177, 186, 267, and 279 each coordinate L-citrulline.

This sequence belongs to the argininosuccinate synthase family. Type 1 subfamily. Homotetramer.

It is found in the cytoplasm. It carries out the reaction L-citrulline + L-aspartate + ATP = 2-(N(omega)-L-arginino)succinate + AMP + diphosphate + H(+). Its pathway is amino-acid biosynthesis; L-arginine biosynthesis; L-arginine from L-ornithine and carbamoyl phosphate: step 2/3. This Pseudothermotoga lettingae (strain ATCC BAA-301 / DSM 14385 / NBRC 107922 / TMO) (Thermotoga lettingae) protein is Argininosuccinate synthase.